The following is a 208-amino-acid chain: MFIKICGIKTPEELEIVESYGNATGVILECASKRRIGLETAKNLVNLSNIPVFAVSTTSEVLVWENIIKLTNTNYLQMHSDIDQKTIDFIKNEYGCFIMKSFKIPETSESPEIDAEKIISDIETYEVDRILLDTGKGCGQTHDHRISQIIAKKFDIILAGGLDPDNVFDIVKNVKPFGVDVSSGVEANNSKDEELIKRFCENVKSVKL.

It belongs to the TrpF family.

It carries out the reaction N-(5-phospho-beta-D-ribosyl)anthranilate = 1-(2-carboxyphenylamino)-1-deoxy-D-ribulose 5-phosphate. The protein operates within amino-acid biosynthesis; L-tryptophan biosynthesis; L-tryptophan from chorismate: step 3/5. The chain is N-(5'-phosphoribosyl)anthranilate isomerase from Methanococcus maripaludis (strain C7 / ATCC BAA-1331).